Here is a 97-residue protein sequence, read N- to C-terminus: MQKSEGFRSKTRYKLQKHPRQKGMAPLTRALKCYTEGDRVHVVLDPSVQKGMPHPKFHGKTGVVVAQRGRSFLVRVKDGGKYKDIIARPQHLRESKL.

The tract at residues 1–26 (MQKSEGFRSKTRYKLQKHPRQKGMAP) is disordered. The segment covering 9–21 (SKTRYKLQKHPRQ) has biased composition (basic residues).

This sequence belongs to the eukaryotic ribosomal protein eL21 family.

This is Large ribosomal subunit protein eL21 from Methanococcus maripaludis (strain C6 / ATCC BAA-1332).